The primary structure comprises 623 residues: Bifunctional dihydrofolate reductase-thymidylate synthase (623 aa).

The DHFR domain maps to D9–K237. Residue I13 to C14 participates in substrate binding. NADP(+) contacts are provided by residues A15 and G38–T44. D53 is a binding site for substrate. 3 tandem repeats follow at residues G88 to N91, G94 to N97, and G100 to N103. Residues G88 to N103 are 3 X 4 AA repeats of G-G-D-N. NADP(+) is bound by residues R115–S117, S137–T139, and D153. Residues I173, Y179, and T194 each contribute to the substrate site. G174–E181 lines the NADP(+) pocket. Residues T263–T309 are disordered. The span at P291–K304 shows a compositional bias: basic residues. Residues Q337–A623 are thymidylate synthase. R360 lines the dUMP pocket. C505 is a catalytic residue. DUMP contacts are provided by residues H506, Q524–D528, N536, and H566–Y568.

This sequence in the N-terminal section; belongs to the dihydrofolate reductase family. In the C-terminal section; belongs to the thymidylate synthase family. As to quaternary structure, homodimer.

It carries out the reaction (6S)-5,6,7,8-tetrahydrofolate + NADP(+) = 7,8-dihydrofolate + NADPH + H(+). The catalysed reaction is dUMP + (6R)-5,10-methylene-5,6,7,8-tetrahydrofolate = 7,8-dihydrofolate + dTMP. Its pathway is cofactor biosynthesis; tetrahydrofolate biosynthesis; 5,6,7,8-tetrahydrofolate from 7,8-dihydrofolate: step 1/1. Bifunctional enzyme. Involved in de novo dTMP biosynthesis. Key enzyme in folate metabolism. Catalyzes an essential reaction for de novo glycine and purine synthesis, DNA precursor synthesis, and for the conversion of dUMP to dTMP. In Plasmodium vivax, this protein is Bifunctional dihydrofolate reductase-thymidylate synthase.